Reading from the N-terminus, the 365-residue chain is Zinc finger TRAF-type-containing protein 1-A (365 aa).

Residues 1–56 are disordered; that stretch reads MSEEREAPGPLASSSAGLGAEVGQEEVPGGAGPARLLLLPSDSDGPPKKRLRSEAE. An RING-type; degenerate zinc finger spans residues 72–117; that stretch reads CTVCLDLPKASVYQCTNGHLMCAGCFIHLLADSRLKEEQATCPNCR. Residues 113–186 form a TRAF-type zinc finger; sequence CPNCRCEISK…PWEGPYHELT (74 aa).

This sequence belongs to the ZFTRAF1 family.

The protein localises to the cytoplasm. The polypeptide is Zinc finger TRAF-type-containing protein 1-A (Xenopus laevis (African clawed frog)).